Consider the following 398-residue polypeptide: Gastric triacylglycerol lipase (398 aa).

The first 19 residues, methionine 1–glycine 19, serve as a signal peptide directing secretion. Asparagine 34 and asparagine 99 each carry an N-linked (GlcNAc...) asparagine glycan. The AB hydrolase-1 domain maps to proline 78–tryptophan 377. The active-site Nucleophile is serine 172. A disulfide bridge connects residues cysteine 246 and cysteine 255. N-linked (GlcNAc...) asparagine glycosylation is found at asparagine 271 and asparagine 327. Residues aspartate 343 and histidine 372 each act as charge relay system in the active site.

This sequence belongs to the AB hydrolase superfamily. Lipase family.

It localises to the secreted. The catalysed reaction is a triacylglycerol + H2O = a diacylglycerol + a fatty acid + H(+). The enzyme catalyses 1,2,3-tri-(9Z-octadecenoyl)-glycerol + H2O = 1,2-di-(9Z-octadecenoyl)-sn-glycerol + (9Z)-octadecenoate + H(+). It catalyses the reaction 1,2,3-trioctanoylglycerol + H2O = 1,2-dioctanoyl-sn-glycerol + octanoate + H(+). Functionally, catalyzes the hydrolysis of triacylglycerols to yield free fatty acids, diacylglycerol, monoacylglycerol, and glycerol. Shows a preferential hydrolysis at the sn-3 position of triacylglycerol. This Homo sapiens (Human) protein is Gastric triacylglycerol lipase (LIPF).